The following is a 160-amino-acid chain: Serine-protein kinase RsbW (160 aa).

The protein belongs to the anti-sigma-factor family.

It carries out the reaction L-seryl-[protein] + ATP = O-phospho-L-seryl-[protein] + ADP + H(+). The catalysed reaction is L-threonyl-[protein] + ATP = O-phospho-L-threonyl-[protein] + ADP + H(+). Its function is as follows. Negative regulator of sigma-B activity. Phosphorylates and inactivates its specific antagonist protein, RsbV. Upon phosphorylation of RsbV, RsbW is released and binds to sigma-B, thereby blocking its ability to form an RNA polymerase holoenzyme (E-sigma-B). This is Serine-protein kinase RsbW from Bacillus cereus (strain AH187).